We begin with the raw amino-acid sequence, 94 residues long: Large ribosomal subunit protein uL23 (94 aa).

The protein belongs to the universal ribosomal protein uL23 family. As to quaternary structure, part of the 50S ribosomal subunit. Contacts protein L29, and trigger factor when it is bound to the ribosome.

One of the early assembly proteins it binds 23S rRNA. One of the proteins that surrounds the polypeptide exit tunnel on the outside of the ribosome. Forms the main docking site for trigger factor binding to the ribosome. In Trichlorobacter lovleyi (strain ATCC BAA-1151 / DSM 17278 / SZ) (Geobacter lovleyi), this protein is Large ribosomal subunit protein uL23.